The following is a 276-amino-acid chain: Dermonecrotic toxin LlSicTox-alphaIV2i (276 aa).

The active site involves H5. E25 and D27 together coordinate Mg(2+). The active-site Nucleophile is the H41. 2 disulfide bridges follow: C45–C51 and C47–C193. D85 is a binding site for Mg(2+).

The protein belongs to the arthropod phospholipase D family. Class II subfamily. The cofactor is Mg(2+). In terms of tissue distribution, expressed by the venom gland.

The protein localises to the secreted. The catalysed reaction is an N-(acyl)-sphingosylphosphocholine = an N-(acyl)-sphingosyl-1,3-cyclic phosphate + choline. It catalyses the reaction an N-(acyl)-sphingosylphosphoethanolamine = an N-(acyl)-sphingosyl-1,3-cyclic phosphate + ethanolamine. It carries out the reaction a 1-acyl-sn-glycero-3-phosphocholine = a 1-acyl-sn-glycero-2,3-cyclic phosphate + choline. The enzyme catalyses a 1-acyl-sn-glycero-3-phosphoethanolamine = a 1-acyl-sn-glycero-2,3-cyclic phosphate + ethanolamine. Functionally, dermonecrotic toxins cleave the phosphodiester linkage between the phosphate and headgroup of certain phospholipids (sphingolipid and lysolipid substrates), forming an alcohol (often choline) and a cyclic phosphate. This toxin acts on sphingomyelin (SM). It may also act on ceramide phosphoethanolamine (CPE), lysophosphatidylcholine (LPC) and lysophosphatidylethanolamine (LPE), but not on lysophosphatidylserine (LPS), and lysophosphatidylglycerol (LPG). It acts by transphosphatidylation, releasing exclusively cyclic phosphate products as second products. Induces dermonecrosis, hemolysis, increased vascular permeability, edema, inflammatory response, and platelet aggregation. The sequence is that of Dermonecrotic toxin LlSicTox-alphaIV2i from Loxosceles laeta (South American recluse spider).